We begin with the raw amino-acid sequence, 231 residues long: Acyl-protein thioesterase 2 (231 aa).

A lipid anchor (S-palmitoyl cysteine) is attached at cysteine 2. Residue serine 82 is modified to Phosphoserine. Catalysis depends on charge relay system residues serine 122, aspartate 176, and histidine 210.

Belongs to the AB hydrolase superfamily. AB hydrolase 2 family.

The protein localises to the cytoplasm. The catalysed reaction is S-hexadecanoyl-L-cysteinyl-[protein] + H2O = L-cysteinyl-[protein] + hexadecanoate + H(+). The enzyme catalyses prostaglandin E2 1-glyceryl ester + H2O = prostaglandin E2 + glycerol + H(+). It catalyses the reaction 1-hexadecanoyl-sn-glycero-3-phosphocholine + H2O = sn-glycerol 3-phosphocholine + hexadecanoate + H(+). It carries out the reaction 1-octadecanoyl-sn-glycero-3-phosphocholine + H2O = octadecanoate + sn-glycerol 3-phosphocholine + H(+). The catalysed reaction is 1-hexadecanoyl-sn-glycero-3-phosphate + H2O = sn-glycerol 3-phosphate + hexadecanoate + H(+). The enzyme catalyses 1-hexadecanoyl-sn-glycero-3-phospho-L-serine + H2O = sn-glycero-3-phospho-L-serine + hexadecanoate + H(+). Acts as an acyl-protein thioesterase hydrolyzing fatty acids from S-acylated cysteine residues in proteins such as trimeric G alpha proteins, GSDMD, GAP43, ZDHHC6 or HRAS. Deacylates GAP43. Mediates depalmitoylation of ZDHHC6. Has lysophospholipase activity. Hydrolyzes prostaglandin glycerol esters (PG-Gs) in the following order prostaglandin D2-glycerol ester (PGD2-G) &gt; prostaglandin E2 glycerol ester (PGE2-G) &gt; prostaglandin F2-alpha-glycerol ester (PGF2-alpha-G). Hydrolyzes 1-arachidonoylglycerol but not 2-arachidonoylglycerol or arachidonoylethanolamide. This chain is Acyl-protein thioesterase 2 (Lypla2), found in Rattus norvegicus (Rat).